The chain runs to 375 residues: Protein GOLM2 (375 aa).

Residues 1 to 12 lie on the Cytoplasmic side of the membrane; sequence MVGFGANRRGGR. The chain crosses the membrane as a helical; Signal-anchor for type II membrane protein span at residues 13–33; that stretch reads LPSFLLAALLLVIAVLAFNCW. A coiled-coil region spans residues 34–198; that stretch reads NAASRQAVLR…REQKATQRIQ (165 aa). Over 34-375 the chain is Lumenal; sequence NAASRQAVLR…SKPRFGDGVL (342 aa). Disordered regions lie at residues 81-102, 193-327, and 342-375; these read LEQK…DGQV, ATQR…DSQN, and RAVG…DGVL. Basic and acidic residues-rich tracts occupy residues 193–204 and 350–375; these read ATQRIQSSKDAE and KQND…DGVL.

It belongs to the GOLM family.

It is found in the membrane. This is Protein GOLM2 (GOLM2) from Gallus gallus (Chicken).